Reading from the N-terminus, the 825-residue chain is Probable inorganic carbon transporter subunit DabA (825 aa).

Positions 334, 336, 521, and 536 each coordinate Zn(2+).

Belongs to the inorganic carbon transporter (TC 9.A.2) DabA family. In terms of assembly, forms a complex with DabB. Zn(2+) serves as cofactor.

It localises to the cell inner membrane. Functionally, part of an energy-coupled inorganic carbon pump. The protein is Probable inorganic carbon transporter subunit DabA of Acidithiobacillus ferrooxidans (strain ATCC 53993 / BNL-5-31) (Leptospirillum ferrooxidans (ATCC 53993)).